A 222-amino-acid chain; its full sequence is Cytidylate kinase (222 aa).

Residue 12 to 20 coordinates ATP; sequence GPSGAGKGT.

It belongs to the cytidylate kinase family. Type 1 subfamily.

The protein resides in the cytoplasm. It catalyses the reaction CMP + ATP = CDP + ADP. It carries out the reaction dCMP + ATP = dCDP + ADP. The protein is Cytidylate kinase of Methylococcus capsulatus (strain ATCC 33009 / NCIMB 11132 / Bath).